Reading from the N-terminus, the 339-residue chain is Ribosomal RNA small subunit methyltransferase C (339 aa).

Belongs to the methyltransferase superfamily. RsmC family. In terms of assembly, monomer.

It localises to the cytoplasm. The enzyme catalyses guanosine(1207) in 16S rRNA + S-adenosyl-L-methionine = N(2)-methylguanosine(1207) in 16S rRNA + S-adenosyl-L-homocysteine + H(+). Specifically methylates the guanine in position 1207 of 16S rRNA in the 30S particle. The chain is Ribosomal RNA small subunit methyltransferase C from Photobacterium profundum (strain SS9).